The following is a 390-amino-acid chain: Nuclear receptor subfamily 2 group F member 6 (390 aa).

Residues 1–15 (MAMVTGGWGGPGGDT) are compositionally biased toward gly residues. The segment at 1–50 (MAMVTGGWGGPGGDTNGVDKAGGSYPRATEDDSASPPGATSDAEPGDEER) is disordered. Phosphoserine is present on residues Ser35 and Ser41. Positions 54–129 (QVDCVVCGDK…VGMRKEAVQP (76 aa)) form a DNA-binding region, nuclear receptor. 2 NR C4-type zinc fingers span residues 57–77 (CVVCGDKSSGKHYGVFTCEGC) and 93–117 (CRSNRDCQIDQHHRNQCQYCRLKKC). The region spanning 157 to 380 (PVSELIAQLL…TLIRDMLLSG (224 aa)) is the NR LBD domain. The tract at residues 314 to 390 (LQEKAQVALT…STFNWPYGSG (77 aa)) is important for dimerization.

This sequence belongs to the nuclear hormone receptor family. NR2 subfamily. Binds DNA as dimer; homodimer and heterodimer with NR2F2 and probably NR2F1. Interacts with THRB.

It is found in the nucleus. Its function is as follows. Transcription factor predominantly involved in transcriptional repression. Binds to promoter/enhancer response elements that contain the imperfect 5'-AGGTCA-3' direct or inverted repeats with various spacings which are also recognized by other nuclear hormone receptors. Involved in modulation of hormonal responses. Represses transcriptional activity of the lutropin-choriogonadotropic hormone receptor/LHCGR gene, the renin/REN gene and the oxytocin-neurophysin/OXT gene. Represses the triiodothyronine-dependent and -independent transcriptional activity of the thyroid hormone receptor gene in a cell type-specific manner. The corepressing function towards thyroid hormone receptor beta/THRB involves at least in part the inhibition of THRB binding to triiodothyronine response elements (TREs) by NR2F6. Inhibits NFATC transcription factor DNA binding and subsequently its transcriptional activity. Acts as transcriptional repressor of IL-17 expression in Th-17 differentiated CD4(+) T cells and may be involved in induction and/or maintenance of peripheral immunological tolerance and autoimmunity. Involved in development of forebrain circadian clock; is required early in the development of the locus coeruleus (LC). This Rattus norvegicus (Rat) protein is Nuclear receptor subfamily 2 group F member 6 (Nr2f6).